The chain runs to 372 residues: Spermidine/putrescine import ATP-binding protein PotA (372 aa).

An ABC transporter domain is found at 13-243; that stretch reads IKLTGISKSF…PKNLFVARFI (231 aa). 45–52 serves as a coordination point for ATP; it reads GPSGCGKT.

This sequence belongs to the ABC transporter superfamily. Spermidine/putrescine importer (TC 3.A.1.11.1) family. As to quaternary structure, the complex is composed of two ATP-binding proteins (PotA), two transmembrane proteins (PotB and PotC) and a solute-binding protein (PotD).

Its subcellular location is the cell inner membrane. It catalyses the reaction ATP + H2O + polyamine-[polyamine-binding protein]Side 1 = ADP + phosphate + polyamineSide 2 + [polyamine-binding protein]Side 1.. Its function is as follows. Part of the ABC transporter complex PotABCD involved in spermidine/putrescine import. Responsible for energy coupling to the transport system. This Aliivibrio fischeri (strain ATCC 700601 / ES114) (Vibrio fischeri) protein is Spermidine/putrescine import ATP-binding protein PotA.